We begin with the raw amino-acid sequence, 314 residues long: tRNA pseudouridine synthase B (314 aa).

Residue His-43 participates in substrate binding. Asp-48 (nucleophile) is an active-site residue. Positions 76, 179, and 200 each coordinate substrate.

Belongs to the pseudouridine synthase TruB family. Type 1 subfamily.

The catalysed reaction is uridine(55) in tRNA = pseudouridine(55) in tRNA. Functionally, responsible for synthesis of pseudouridine from uracil-55 in the psi GC loop of transfer RNAs. This Escherichia coli O157:H7 protein is tRNA pseudouridine synthase B.